The sequence spans 333 residues: Glycerol-3-phosphate dehydrogenase [NAD(P)+] (333 aa).

NADPH contacts are provided by Trp-12, His-31, and Lys-105. Residues Lys-105, Gly-134, and Ser-136 each contribute to the sn-glycerol 3-phosphate site. An NADPH-binding site is contributed by Ala-138. The sn-glycerol 3-phosphate site is built by Lys-189, Asp-242, Ser-252, Arg-253, and Asn-254. Lys-189 serves as the catalytic Proton acceptor. An NADPH-binding site is contributed by Arg-253. Val-278 and Glu-280 together coordinate NADPH.

Belongs to the NAD-dependent glycerol-3-phosphate dehydrogenase family.

It localises to the cytoplasm. The enzyme catalyses sn-glycerol 3-phosphate + NAD(+) = dihydroxyacetone phosphate + NADH + H(+). The catalysed reaction is sn-glycerol 3-phosphate + NADP(+) = dihydroxyacetone phosphate + NADPH + H(+). Its pathway is membrane lipid metabolism; glycerophospholipid metabolism. In terms of biological role, catalyzes the reduction of the glycolytic intermediate dihydroxyacetone phosphate (DHAP) to sn-glycerol 3-phosphate (G3P), the key precursor for phospholipid synthesis. The sequence is that of Glycerol-3-phosphate dehydrogenase [NAD(P)+] from Brachyspira hyodysenteriae (strain ATCC 49526 / WA1).